The primary structure comprises 502 residues: NAD(P)H-quinone oxidoreductase chain 4, chloroplastic (502 aa).

The next 13 helical transmembrane spans lie at Y4–L24, L39–I59, I89–V109, L115–T132, I136–M156, F169–L189, I209–I229, H244–I264, S276–I296, M315–L335, S387–V407, I418–M438, and I466–I486.

Belongs to the complex I subunit 4 family.

The protein resides in the plastid. The protein localises to the chloroplast thylakoid membrane. It carries out the reaction a plastoquinone + NADH + (n+1) H(+)(in) = a plastoquinol + NAD(+) + n H(+)(out). The enzyme catalyses a plastoquinone + NADPH + (n+1) H(+)(in) = a plastoquinol + NADP(+) + n H(+)(out). This chain is NAD(P)H-quinone oxidoreductase chain 4, chloroplastic, found in Huperzia lucidula (Shining clubmoss).